The chain runs to 695 residues: UvrABC system protein C (695 aa).

Residues 1–10 are compositionally biased toward basic and acidic residues; it reads MNQDPAETRD. A disordered region spans residues 1 to 53; that stretch reads MNQDPAETRDTAAPPPADTTSPSPVSPELEPRSAPGAQDIDAASASLTVDEDD. The segment covering 18-27 has biased composition (low complexity); sequence DTTSPSPVSP. Residues 88–166 enclose the GIY-YIG domain; that stretch reads TSPGVYRMLN…IKQLRPRFNV (79 aa). In terms of domain architecture, UVR spans 276–311; the sequence is RAVKQELAVEMEKASNELEFETAALYRDRLAALSAI.

The protein belongs to the UvrC family. As to quaternary structure, interacts with UvrB in an incision complex.

Its subcellular location is the cytoplasm. The UvrABC repair system catalyzes the recognition and processing of DNA lesions. UvrC both incises the 5' and 3' sides of the lesion. The N-terminal half is responsible for the 3' incision and the C-terminal half is responsible for the 5' incision. The sequence is that of UvrABC system protein C from Rhodopseudomonas palustris (strain BisB5).